A 238-amino-acid chain; its full sequence is Probable transcriptional regulatory protein HH_1604 (238 aa).

This sequence belongs to the TACO1 family.

It localises to the cytoplasm. This chain is Probable transcriptional regulatory protein HH_1604, found in Helicobacter hepaticus (strain ATCC 51449 / 3B1).